A 420-amino-acid chain; its full sequence is MDEDAESRVSSTRSYDRRGHLDWLRKLPDSLLCQVFLNLPTKDVVKTSVLSSTWGNIWRSVPGLDLGYGDFPEYNAFVSFVDSFLGFNSESRLQNFKLNYQYLRLKYEWKWTELDNANVTRWINTVIKRKVEHLHLSDVTFSNPESVSLPCVKVMYLDMVKFANDLAFEMLISGCPVLESLTIKRSACDNVDYLRVCSQSLLSFTLVGHCNEDMVKEQVVAIDAPRLEDLKLYCHETASFIIKNPASLVKMDIDIMFNLSSEQKFDPNDLPKRNMIRNFLLGISGVKEMEISSHTLEVIYNYSRCERLPVFRNLSSLHADFDDYRWEMLPGFSKTPGEEPISILPGPQCNLPALEFVDILKPMVEKETELKLMSYFLEKSTILKKLTLRLGDFRGNEESALLKKLLTIPRLSSSCQVVVL.

An F-box domain is found at 21–71 (LDWLRKLPDSLLCQVFLNLPTKDVVKTSVLSSTWGNIWRSVPGLDLGYGDF). The FBD domain maps to 341–390 (ISILPGPQCNLPALEFVDILKPMVEKETELKLMSYFLEKSTILKKLTLRL).

This chain is Putative FBD-associated F-box protein At1g78730, found in Arabidopsis thaliana (Mouse-ear cress).